The primary structure comprises 264 residues: Rano class II histocompatibility antigen, D-1 beta chain (264 aa).

Positions 1-26 are cleaved as a signal peptide; it reads MVWLARDSCVAAVILLLTVLSPPVAL. The segment at 27–120 is beta-1; the sequence is VRDPTPRFLE…EISESFLVPR (94 aa). Residues 27–226 are Extracellular-facing; it reads VRDPTPRFLE…AQSTSAQNKK (200 aa). Cystine bridges form between cysteine 42-cysteine 106 and cysteine 144-cysteine 200. N-linked (GlcNAc...) asparagine glycosylation occurs at asparagine 46. The segment at 121–215 is beta-2; the sequence is TVEPKVTVYP…SLPSPVRVEW (95 aa). The Ig-like C1-type domain maps to 124-228; the sequence is PKVTVYPSKT…STSAQNKKMS (105 aa). The tract at residues 216–226 is connecting peptide; the sequence is KAQSTSAQNKK. Residues 227 to 248 traverse the membrane as a helical segment; it reads MSGVGGIVLGLLFLGAGLFVYF. Over 249 to 264 the chain is Cytoplasmic; the sequence is RNQKGQSGLQPTGLLN.

The protein belongs to the MHC class II family.

The protein resides in the membrane. Functionally, involved in the presentation of foreign antigens to the immune system. The protein is Rano class II histocompatibility antigen, D-1 beta chain (RT1-Db1) of Rattus norvegicus (Rat).